Reading from the N-terminus, the 434-residue chain is Bestrophin homolog 12 (434 aa).

Transmembrane regions (helical) follow at residues K31–F51, V76–E96, I244–F264, and W278–G298.

Belongs to the anion channel-forming bestrophin (TC 1.A.46) family. Calcium-sensitive chloride channel subfamily. As to quaternary structure, forms oligomers.

The protein localises to the cell membrane. Its function is as follows. Forms chloride channels. This chain is Bestrophin homolog 12 (best-12), found in Caenorhabditis elegans.